Reading from the N-terminus, the 253-residue chain is 5'-nucleotidase SurE (253 aa).

A divalent metal cation contacts are provided by aspartate 8, aspartate 9, serine 40, and asparagine 92.

It belongs to the SurE nucleotidase family. The cofactor is a divalent metal cation.

The protein localises to the cytoplasm. It catalyses the reaction a ribonucleoside 5'-phosphate + H2O = a ribonucleoside + phosphate. Functionally, nucleotidase that shows phosphatase activity on nucleoside 5'-monophosphates. The chain is 5'-nucleotidase SurE from Hyphomonas neptunium (strain ATCC 15444).